Here is a 436-residue protein sequence, read N- to C-terminus: Arginine-hydroxylase NDUFAF5, mitochondrial (436 aa).

Residues Met-1–Tyr-25 constitute a mitochondrion transit peptide. Residues Val-365–Lys-436 form a disordered region. A compositionally biased stretch (low complexity) spans Gln-369 to Gln-380. 2 stretches are compositionally biased toward basic and acidic residues: residues Pro-391–Lys-411 and Gln-421–Lys-436.

The protein belongs to the methyltransferase superfamily.

Its subcellular location is the mitochondrion. Its function is as follows. Involved in the assembly of mitochondrial NADH:ubiquinone oxidoreductase complex (complex I, MT-ND1) at early stages. Probably acts as an arginine hydroxylase. May also have methyltransferase activity. In Dictyostelium discoideum (Social amoeba), this protein is Arginine-hydroxylase NDUFAF5, mitochondrial.